Reading from the N-terminus, the 55-residue chain is MNIPKTCFQIHNKIQVQNYLIRINLNIFLIYHFSPIYCPYLFLFTVFFNSLINLI.

The chain crosses the membrane as a helical span at residues 27 to 47 (IFLIYHFSPIYCPYLFLFTVF).

The protein localises to the membrane. This is an uncharacterized protein from Acheta domesticus (House cricket).